The sequence spans 83 residues: ATP synthase subunit c (83 aa).

Helical transmembrane passes span I10 to L30 and M52 to Y72.

The protein belongs to the ATPase C chain family. As to quaternary structure, F-type ATPases have 2 components, F(1) - the catalytic core - and F(0) - the membrane proton channel. F(1) has five subunits: alpha(3), beta(3), gamma(1), delta(1), epsilon(1). F(0) has three main subunits: a(1), b(2) and c(10-14). The alpha and beta chains form an alternating ring which encloses part of the gamma chain. F(1) is attached to F(0) by a central stalk formed by the gamma and epsilon chains, while a peripheral stalk is formed by the delta and b chains.

The protein localises to the cell inner membrane. F(1)F(0) ATP synthase produces ATP from ADP in the presence of a proton or sodium gradient. F-type ATPases consist of two structural domains, F(1) containing the extramembraneous catalytic core and F(0) containing the membrane proton channel, linked together by a central stalk and a peripheral stalk. During catalysis, ATP synthesis in the catalytic domain of F(1) is coupled via a rotary mechanism of the central stalk subunits to proton translocation. In terms of biological role, key component of the F(0) channel; it plays a direct role in translocation across the membrane. A homomeric c-ring of between 10-14 subunits forms the central stalk rotor element with the F(1) delta and epsilon subunits. The protein is ATP synthase subunit c of Shewanella amazonensis (strain ATCC BAA-1098 / SB2B).